A 447-amino-acid chain; its full sequence is Selenide, water dikinase 3 (447 aa).

Sec50 is an active-site residue. Position 50 (Sec50) is a non-standard amino acid, selenocysteine. Residues Lys53, 103 to 105 (GMD), Asp123, Asp146, and 197 to 200 (GGQT) each bind ATP. Asp105 is a binding site for Mg(2+). Asp146 provides a ligand contact to Mg(2+). Asp301 contributes to the Mg(2+) binding site.

It belongs to the selenophosphate synthase 1 family. In terms of assembly, homodimer. It depends on Mg(2+) as a cofactor. In the embryo, expressed in retina, olfactory vesicles, tectum, pronephros ducts and myotomes at 24 hours post-fertilization and in retina, tectum, liver and intestinal bulb 3 days after fertilization.

The enzyme catalyses hydrogenselenide + ATP + H2O = selenophosphate + AMP + phosphate + 2 H(+). In terms of biological role, synthesizes selenophosphate from selenide and ATP. In Danio rerio (Zebrafish), this protein is Selenide, water dikinase 3.